The following is a 304-amino-acid chain: Tyrosine recombinase XerC (304 aa).

The Core-binding (CB) domain maps to 2 to 88 (ANVKNFLTLF…ALRSFYKFLL (87 aa)). The 186-residue stretch at 109 to 294 (RIPKFLYEKE…SKDMLRKTYM (186 aa)) folds into the Tyr recombinase domain. Residues R149, K173, H246, R249, and H272 contribute to the active site. The O-(3'-phospho-DNA)-tyrosine intermediate role is filled by Y281.

It belongs to the 'phage' integrase family. XerC subfamily. In terms of assembly, forms a cyclic heterotetrameric complex composed of two molecules of XerC and two molecules of XerD.

The protein localises to the cytoplasm. Its function is as follows. Site-specific tyrosine recombinase, which acts by catalyzing the cutting and rejoining of the recombining DNA molecules. The XerC-XerD complex is essential to convert dimers of the bacterial chromosome into monomers to permit their segregation at cell division. It also contributes to the segregational stability of plasmids. The chain is Tyrosine recombinase XerC from Bacillus licheniformis (strain ATCC 14580 / DSM 13 / JCM 2505 / CCUG 7422 / NBRC 12200 / NCIMB 9375 / NCTC 10341 / NRRL NRS-1264 / Gibson 46).